Here is a 345-residue protein sequence, read N- to C-terminus: N-glycosylase/DNA lyase (345 aa).

Residues Asn149, Arg154, and Arg204 each coordinate DNA. Residue Lys249 is the Schiff-base intermediate with DNA of the active site. Pro266 and Asp268 together coordinate 8-oxoguanine. DNA-binding residues include His270 and Gln287. 8-oxoguanine contacts are provided by Gln315 and Phe319. Residues 324 to 334 show a composition bias toward basic and acidic residues; the sequence is RQSRHAQEPPA. The interval 324-345 is disordered; sequence RQSRHAQEPPAKRRKGSKGPEG. A compositionally biased stretch (basic residues) spans 335–345; it reads KRRKGSKGPEG.

It belongs to the type-1 OGG1 family. Ubiquitous.

Its subcellular location is the nucleus. It localises to the nucleoplasm. It is found in the nucleus speckle. The protein localises to the nucleus matrix. The protein resides in the mitochondrion. The enzyme catalyses 2'-deoxyribonucleotide-(2'-deoxyribose 5'-phosphate)-2'-deoxyribonucleotide-DNA = a 3'-end 2'-deoxyribonucleotide-(2,3-dehydro-2,3-deoxyribose 5'-phosphate)-DNA + a 5'-end 5'-phospho-2'-deoxyribonucleoside-DNA + H(+). DNA repair enzyme that incises DNA at 8-oxoG residues. Excises 7,8-dihydro-8-oxoguanine and 2,6-diamino-4-hydroxy-5-N-methylformamidopyrimidine (FAPY) from damaged DNA. Has a beta-lyase activity that nicks DNA 3' to the lesion. This chain is N-glycosylase/DNA lyase (OGG1), found in Homo sapiens (Human).